We begin with the raw amino-acid sequence, 328 residues long: Endo-beta-1,4-glucanase B (328 aa).

The N-terminal stretch at 1-17 (MKVNTLLVAVAAGTAMA) is a signal peptide. A glycan (N-linked (GlcNAc...) asparagine) is linked at asparagine 95. The active-site Proton donor is glutamate 155. Glutamate 262 (nucleophile) is an active-site residue.

The protein belongs to the glycosyl hydrolase 5 (cellulase A) family.

The protein resides in the secreted. The catalysed reaction is Endohydrolysis of (1-&gt;4)-beta-D-glucosidic linkages in cellulose, lichenin and cereal beta-D-glucans.. Has endoglucanase activity on substrates containing beta-1,4 glycosidic bonds, like in carboxymethylcellulose (CMC), hydroxyethylcellulose (HEC) and beta-glucan. Involved in the degradation of complex natural cellulosic substrates. This is Endo-beta-1,4-glucanase B (eglB) from Emericella nidulans (strain FGSC A4 / ATCC 38163 / CBS 112.46 / NRRL 194 / M139) (Aspergillus nidulans).